Here is a 436-residue protein sequence, read N- to C-terminus: MRQALPLVTRQGDRIAIVSGLRTPFARQATAFHGIPAVDLGKMVVGELLARSEIPADAIEQLVFGQVVQMPEAPNIAREIVLGTGMNVHTDAYSVSRACATSFQAVANVAESLMAGTIRAGIAGGADSSSVLPIGVSKALARVLVDVNKARTTRQRLTLFSRLRLRDLLPVPPAVAEYSTGLRMGDTAEQMAKTYGITREQQDALAHRSHQRAAQAWAEGKLAEEVMTTYVPPYKNPFAEDNNIRGASTLADYAKLRPAFDRKHGSVTAANSTPLTDGAAAVILMTESRAKELGLRPLGYLRTYAFTAIDVWQDMLLGPAWSTPLALERAGLTMADLTLFDMHEAFAAQTLANLQLLGSERFAREVLGCAQATGEVDDAKFNVLGGSIAYGHPFAATGARMITQTLHELRRRGGGFGLVTACAAGGLGAAMVLEAE.

Catalysis depends on Cys99, which acts as the Acyl-thioester intermediate. Active-site proton acceptor residues include His392 and Cys422.

The protein belongs to the thiolase-like superfamily. Thiolase family. In terms of assembly, heterotetramer of two alpha chains (FadJ) and two beta chains (FadI).

The protein resides in the cytoplasm. It carries out the reaction an acyl-CoA + acetyl-CoA = a 3-oxoacyl-CoA + CoA. Its pathway is lipid metabolism; fatty acid beta-oxidation. Catalyzes the final step of fatty acid oxidation in which acetyl-CoA is released and the CoA ester of a fatty acid two carbons shorter is formed. The sequence is that of 3-ketoacyl-CoA thiolase from Salmonella typhimurium (strain LT2 / SGSC1412 / ATCC 700720).